A 169-amino-acid chain; its full sequence is Probable calcium-binding protein CML20 (169 aa).

The interval 1 to 23 (MSSIYRTVSRKEKPRRHHGLTTQ) is disordered. 4 EF-hand domains span residues 23–58 (QKKQEIKEAFELFDTDGSGTIDAKELNVAMRALGFE), 59–94 (MTEEQINKMIADVDKDGSGAIDFDEFVHMMTAKIGE), 96–131 (DTKEELTKAFQIIDLDKNGKISPDDIKRMAKDLGEN), and 132–167 (FTDAEIREMVEEADRDRDGEVNMDEFMRMMRRTAYG). 19 residues coordinate Ca(2+): Asp36, Asp38, Ser40, Thr42, Glu47, Asp72, Asp74, Ser76, Glu83, Asp109, Asp111, Asn113, Lys115, Asp120, Asp145, Asp147, Asp149, Glu151, and Glu156.

As to quaternary structure, interacts with TON1A and TON1B. Interacts with SAC3A and SAC3B. Interacts with UCH1 and UCH2.

Its function is as follows. Potential calcium sensor. The polypeptide is Probable calcium-binding protein CML20 (Arabidopsis thaliana (Mouse-ear cress)).